A 210-amino-acid chain; its full sequence is Isochorismatase domain-containing protein 2 (210 aa).

Phosphoserine is present on Ser-7.

This sequence belongs to the isochorismatase family. In terms of assembly, interacts with CDKN2A.

The protein localises to the cytoplasm. It localises to the nucleus. The chain is Isochorismatase domain-containing protein 2 (Isoc2) from Rattus norvegicus (Rat).